The primary structure comprises 361 residues: Biotin synthase (361 aa).

One can recognise a Radical SAM core domain in the interval 47-278 (VHGDEVALCG…AAHIFVMGGR (232 aa)). [4Fe-4S] cluster is bound by residues Cys-65, Cys-69, and Cys-72. Positions 110, 143, and 203 each coordinate [2Fe-2S] cluster.

This sequence belongs to the radical SAM superfamily. Biotin synthase family. In terms of assembly, homodimer. It depends on [4Fe-4S] cluster as a cofactor. The cofactor is [2Fe-2S] cluster.

It carries out the reaction (4R,5S)-dethiobiotin + (sulfur carrier)-SH + 2 reduced [2Fe-2S]-[ferredoxin] + 2 S-adenosyl-L-methionine = (sulfur carrier)-H + biotin + 2 5'-deoxyadenosine + 2 L-methionine + 2 oxidized [2Fe-2S]-[ferredoxin]. Its pathway is cofactor biosynthesis; biotin biosynthesis; biotin from 7,8-diaminononanoate: step 2/2. Catalyzes the conversion of dethiobiotin (DTB) to biotin by the insertion of a sulfur atom into dethiobiotin via a radical-based mechanism. This Anaeromyxobacter dehalogenans (strain 2CP-C) protein is Biotin synthase.